A 120-amino-acid polypeptide reads, in one-letter code: Small ribosomal subunit protein eS24 (120 aa).

The interval 101–120 (RDAGTKQKKGGSKGGQGAKG) is disordered.

This sequence belongs to the eukaryotic ribosomal protein eS24 family.

The polypeptide is Small ribosomal subunit protein eS24 (Saccharolobus islandicus (strain Y.N.15.51 / Yellowstone #2) (Sulfolobus islandicus)).